The primary structure comprises 403 residues: Cell cycle checkpoint control protein RAD9B (403 aa).

Residues 285-347 (PLSQARRSHP…ASAGQDDIFE (63 aa)) form a disordered region. 2 positions are modified to phosphoserine: Ser-354 and Ser-363.

This sequence belongs to the rad9 family. As to quaternary structure, interacts with HUS1, HUS1B, RAD1, RAD9A and RAD17.

This Mus musculus (Mouse) protein is Cell cycle checkpoint control protein RAD9B (Rad9b).